Reading from the N-terminus, the 365-residue chain is Ribosomal RNA large subunit methyltransferase F (365 aa).

Residues M1–R49 are disordered. Over residues A33 to R49 the composition is skewed to basic and acidic residues.

The protein belongs to the methyltransferase superfamily. METTL16/RlmF family.

The protein localises to the cytoplasm. The catalysed reaction is adenosine(1618) in 23S rRNA + S-adenosyl-L-methionine = N(6)-methyladenosine(1618) in 23S rRNA + S-adenosyl-L-homocysteine + H(+). Specifically methylates the adenine in position 1618 of 23S rRNA. This is Ribosomal RNA large subunit methyltransferase F from Shewanella baltica (strain OS185).